Here is a 142-residue protein sequence, read N- to C-terminus: Large ribosomal subunit protein uL11 (142 aa).

The protein belongs to the universal ribosomal protein uL11 family. As to quaternary structure, part of the ribosomal stalk of the 50S ribosomal subunit. Interacts with L10 and the large rRNA to form the base of the stalk. L10 forms an elongated spine to which L12 dimers bind in a sequential fashion forming a multimeric L10(L12)X complex. Post-translationally, one or more lysine residues are methylated.

Its function is as follows. Forms part of the ribosomal stalk which helps the ribosome interact with GTP-bound translation factors. The polypeptide is Large ribosomal subunit protein uL11 (Buchnera aphidicola subsp. Schizaphis graminum (strain Sg)).